A 433-amino-acid polypeptide reads, in one-letter code: Adenylosuccinate synthetase (433 aa).

GTP is bound by residues 18 to 24 (GDEGKGK) and 46 to 48 (GHT). The active-site Proton acceptor is Asp-19. Residues Asp-19 and Gly-46 each coordinate Mg(2+). Residues 19–22 (DEGK), 44–47 (NAGH), Thr-136, Arg-150, Gln-229, Thr-244, and Arg-308 contribute to the IMP site. His-47 acts as the Proton donor in catalysis. 304 to 310 (VTTKRMR) lines the substrate pocket. Residues Arg-310, 336–338 (KID), and 420–422 (GTG) each bind GTP.

The protein belongs to the adenylosuccinate synthetase family. Homodimer. Mg(2+) is required as a cofactor.

It is found in the cytoplasm. The enzyme catalyses IMP + L-aspartate + GTP = N(6)-(1,2-dicarboxyethyl)-AMP + GDP + phosphate + 2 H(+). It participates in purine metabolism; AMP biosynthesis via de novo pathway; AMP from IMP: step 1/2. Functionally, plays an important role in the de novo pathway and in the salvage pathway of purine nucleotide biosynthesis. Catalyzes the first committed step in the biosynthesis of AMP from IMP. The protein is Adenylosuccinate synthetase of Schistosoma japonicum (Blood fluke).